The primary structure comprises 355 residues: Heat-inducible transcription repressor HrcA (355 aa).

This sequence belongs to the HrcA family.

Functionally, negative regulator of class I heat shock genes (grpE-dnaK-dnaJ and groELS operons). Prevents heat-shock induction of these operons. The polypeptide is Heat-inducible transcription repressor HrcA (Prosthecochloris aestuarii (strain DSM 271 / SK 413)).